The following is a 268-amino-acid chain: NAD kinase (268 aa).

The active-site Proton acceptor is D45. Residues 45–46, 122–123, R148, D150, 161–166, A185, and Q223 contribute to the NAD(+) site; these read DG, NE, and TAYGKS.

It belongs to the NAD kinase family. Requires a divalent metal cation as cofactor.

It localises to the cytoplasm. It catalyses the reaction NAD(+) + ATP = ADP + NADP(+) + H(+). Its function is as follows. Involved in the regulation of the intracellular balance of NAD and NADP, and is a key enzyme in the biosynthesis of NADP. Catalyzes specifically the phosphorylation on 2'-hydroxyl of the adenosine moiety of NAD to yield NADP. This Latilactobacillus sakei subsp. sakei (strain 23K) (Lactobacillus sakei subsp. sakei) protein is NAD kinase.